We begin with the raw amino-acid sequence, 130 residues long: Holo-[acyl-carrier-protein] synthase (130 aa).

D9 and E58 together coordinate Mg(2+).

This sequence belongs to the P-Pant transferase superfamily. AcpS family. It depends on Mg(2+) as a cofactor.

Its subcellular location is the cytoplasm. The enzyme catalyses apo-[ACP] + CoA = holo-[ACP] + adenosine 3',5'-bisphosphate + H(+). Transfers the 4'-phosphopantetheine moiety from coenzyme A to a Ser of acyl-carrier-protein. This chain is Holo-[acyl-carrier-protein] synthase, found in Mycobacterium sp. (strain JLS).